The following is a 727-amino-acid chain: Beta-galactosidase 2 (727 aa).

An N-terminal signal peptide occupies residues 1–27 (MSMHFRNKAWIILAILCFSSLIHSTEA). Glu-185 serves as the catalytic Proton donor. Glu-254 acts as the Nucleophile in catalysis. An N-linked (GlcNAc...) asparagine glycan is attached at Asn-255.

The protein belongs to the glycosyl hydrolase 35 family. In terms of tissue distribution, ubiquitous, with higher expression levels in roots and siliques.

It is found in the secreted. The protein resides in the extracellular space. It localises to the apoplast. It carries out the reaction Hydrolysis of terminal non-reducing beta-D-galactose residues in beta-D-galactosides.. The chain is Beta-galactosidase 2 (BGAL2) from Arabidopsis thaliana (Mouse-ear cress).